The sequence spans 315 residues: Taste receptor type 2 member 3 (315 aa).

Over 1–5 the chain is Extracellular; sequence MGLTE. Residues 6–26 traverse the membrane as a helical segment; sequence GVFLILSGTQFTLGILVNCFI. At 27–41 the chain is on the cytoplasmic side; sequence ELVNGSSWFKTKRMS. Residues 42-62 form a helical membrane-spanning segment; sequence LSDFIITTLALLRIILLCIIL. Over 63–93 the chain is Extracellular; it reads TDSFLIEFSPNTHDSGIIMQIIDVSWTFTNH. Residues 94 to 114 traverse the membrane as a helical segment; that stretch reads LSIWLATCLGVLYCLKIASFS. The Cytoplasmic segment spans residues 115–127; it reads HPTFLWLKWRVSR. A helical transmembrane segment spans residues 128 to 148; that stretch reads VMVWMLLGALLLSCGSTASLI. The Extracellular portion of the chain corresponds to 149 to 185; sequence NEFKLYSVFRGIEATRNVTEHFRKKRSEYYLIHVLGT. N-linked (GlcNAc...) asparagine glycosylation is present at asparagine 165. Residues 186–206 traverse the membrane as a helical segment; it reads LWYLPPLIVSLASYSLLIFSL. At 207-233 the chain is on the cytoplasmic side; the sequence is GRHTRQMLQNGTSSRDPTTEAHKRAIR. Residues 234–254 form a helical membrane-spanning segment; the sequence is IILSFFFLFLLYFLAFLIASF. The Extracellular portion of the chain corresponds to 255-265; it reads GNFLPKTKMAK. The chain crosses the membrane as a helical span at residues 266–286; that stretch reads MIGEVMTMFYPAGHSFILILG. The Cytoplasmic segment spans residues 287–315; that stretch reads NSKLKQTFVVMLRCESGHLKPGSKGPIFS.

The protein belongs to the G-protein coupled receptor T2R family.

The protein localises to the membrane. Functionally, gustducin-coupled receptor implicated in the perception of bitter compounds in the oral cavity and the gastrointestinal tract. Signals through PLCB2 and the calcium-regulated cation channel TRPM5. The protein is Taste receptor type 2 member 3 (TAS2R3) of Gorilla gorilla gorilla (Western lowland gorilla).